The primary structure comprises 551 residues: Chaperonin GroEL (551 aa).

Residues 30-33, Lys51, 87-91, Gly415, 479-481, and Asp495 each bind ATP; these read TLGP, DGTTT, and NAA. The segment at 523–551 is disordered; sequence DSPKEDKSSDMPSPSAGGMGGMGGMGGMM. The span at 539-551 shows a compositional bias: gly residues; that stretch reads GGMGGMGGMGGMM.

Belongs to the chaperonin (HSP60) family. In terms of assembly, forms a cylinder of 14 subunits composed of two heptameric rings stacked back-to-back. Interacts with the co-chaperonin GroES.

Its subcellular location is the cytoplasm. The enzyme catalyses ATP + H2O + a folded polypeptide = ADP + phosphate + an unfolded polypeptide.. In terms of biological role, together with its co-chaperonin GroES, plays an essential role in assisting protein folding. The GroEL-GroES system forms a nano-cage that allows encapsulation of the non-native substrate proteins and provides a physical environment optimized to promote and accelerate protein folding. This chain is Chaperonin GroEL, found in Buchnera aphidicola subsp. Chaetophorus leucomelas.